The chain runs to 103 residues: Large ribosomal subunit protein bL21 (103 aa).

This sequence belongs to the bacterial ribosomal protein bL21 family. In terms of assembly, part of the 50S ribosomal subunit. Contacts protein L20.

Functionally, this protein binds to 23S rRNA in the presence of protein L20. This Serratia proteamaculans (strain 568) protein is Large ribosomal subunit protein bL21.